A 298-amino-acid chain; its full sequence is Multifunctional dioxygenase ausE (298 aa).

Positions 72 and 127 each coordinate substrate. Residues H130 and D132 each coordinate Fe cation. T167 lines the substrate pocket. H214 serves as a coordination point for Fe cation. R226 lines the substrate pocket.

Belongs to the PhyH family. As to quaternary structure, homodimer. Fe cation serves as cofactor.

It catalyses the reaction preaustinoid A1 + 2-oxoglutarate + O2 = preaustinoid A2 + succinate + CO2 + H2O. The enzyme catalyses preaustinoid A2 + 2-oxoglutarate + O2 = preaustinoid A3 + succinate + CO2 + H2O. The catalysed reaction is berkeleyone A + 2-oxoglutarate + O2 = preaustinoid A + succinate + CO2 + H2O. It participates in secondary metabolite biosynthesis; terpenoid biosynthesis. Its function is as follows. Multifunctional dioxygenase; part of the gene cluster that mediates the biosynthesis of calidodehydroaustin, a fungal meroterpenoid. The first step of the pathway is the synthesis of 3,5-dimethylorsellinic acid by the polyketide synthase ausA. 3,5-dimethylorsellinic acid is then prenylated by the polyprenyl transferase ausN. Further epoxidation by the FAD-dependent monooxygenase ausM and cyclization by the probable terpene cyclase ausL lead to the formation of protoaustinoid A. Protoaustinoid A is then oxidized to spiro-lactone preaustinoid A3 by the combined action of the FAD-binding monooxygenases ausB and ausC, and the dioxygenase ausE. Acid-catalyzed keto-rearrangement and ring contraction of the tetraketide portion of preaustinoid A3 by ausJ lead to the formation of preaustinoid A4. The aldo-keto reductase ausK, with the help of ausH, is involved in the next step by transforming preaustinoid A4 into isoaustinone which is in turn hydroxylated by the P450 monooxygenase ausI to form austinolide. The cytochrome P450 monooxygenase ausG modifies austinolide to austinol. Austinol is further acetylated to austin by the O-acetyltransferase ausP, which spontaneously changes to dehydroaustin. The cytochrome P450 monooxygenase ausR then converts dehydroaustin is into 7-dehydrodehydroaustin. The hydroxylation catalyzed by ausR permits the O-acetyltransferase ausQ to add an additional acetyl group to the molecule, leading to the formation of acetoxydehydroaustin. The short chain dehydrogenase ausT catalyzes the reduction of the double bond present between carbon atoms 1 and 2 to convert 7-dehydrodehydroaustin into 1,2-dihydro-7-hydroxydehydroaustin. AusQ catalyzes not only an acetylation reaction but also the addition of the PKS ausV diketide product to 1,2-dihydro-7-hydroxydehydroaustin, forming precalidodehydroaustin. Finally, the iron/alpha-ketoglutarate-dependent dioxygenase converts precalidodehydroaustin into calidodehydroaustin. This Aspergillus calidoustus protein is Multifunctional dioxygenase ausE.